The chain runs to 185 residues: MATPWRRALLMILASQVVTLVKCLEDDDVPEEWLLLHVVQGQIGAGNYSYLRLNHEGKIILRMQSLRGDADLYVSDSTPHPSFDDYELQSVTCGQDVVSIPAHFQRPVGIGIYGHPSHHESDFEMRVYYDRTVDQYPFGEAAYFTDPTGASQQQAYAPEEAAQEEESVLWTILISILKLVLEILF.

The signal sequence occupies residues Met1–Cys23. N-linked (GlcNAc...) asparagine glycosylation is present at Asn47.

This sequence belongs to the UPF0669 family.

Its subcellular location is the secreted. In terms of biological role, may be involved in induction of apoptosis in CD4(+) T-cells, but not CD8(+) T-cells or hepatocytes. This Mus musculus (Mouse) protein is UPF0669 protein C6orf120 homolog.